The chain runs to 565 residues: Thiol:disulfide interchange protein DsbD (565 aa).

An N-terminal signal peptide occupies residues 1-19; that stretch reads MAQRIFTLILLLCSTSVFA. Residues 20–162 are Periplasmic-facing; that stretch reads GLFDAPGRSQ…VPQQEQPTAQ (143 aa). Cystine bridges form between Cys122–Cys128 and Cys182–Cys304. A helical transmembrane segment spans residues 163–183; the sequence is LPFSALWALLIGIGIAFTPCV. Topologically, residues 184 to 207 are cytoplasmic; the sequence is LPMYPLISGIVLGGKQRLSTARAL. Residues 208-228 traverse the membrane as a helical segment; it reads LLTFIYVQGMALTYTALGLVV. The Periplasmic portion of the chain corresponds to 229–242; that stretch reads AAAGLQFQAALQHP. The helical transmembrane segment at 243–263 threads the bilayer; sequence YVLIGLTIVFTLLAMSMFGLL. Residues 264–295 lie on the Cytoplasmic side of the membrane; it reads TLQLPSSLQTRLTLMSNRQQGGSPGGVFIMGT. Residues 296–316 traverse the membrane as a helical segment; sequence IAGLICSPCTTAPLSAILLYI. Topologically, residues 317–322 are periplasmic; that stretch reads AQSGNM. Residues 323 to 343 form a helical membrane-spanning segment; the sequence is WLGGGTLYLYALGMGLPLMLI. Topologically, residues 344 to 356 are cytoplasmic; that stretch reads TVFGNRLLPKSGP. A helical transmembrane segment spans residues 357–377; it reads WMEQVKTAFGFVILALPVFLL. Topologically, residues 378 to 383 are periplasmic; sequence ERVIGD. The helical transmembrane segment at 384–404 threads the bilayer; sequence VWGLRLWSALGVAFFGWAFIT. At 405-417 the chain is on the cytoplasmic side; it reads SLQAKRGWMRVVQ. The helical transmembrane segment at 418 to 438 threads the bilayer; it reads IILLAAALVSVRPLQDWAFGA. The region spanning 434–565 is the Thioredoxin domain; the sequence is WAFGATHTAQ…FSAHLRDRQP (132 aa). Residues 439–565 lie on the Periplasmic side of the membrane; it reads THTAQTQTHL…FSAHLRDRQP (127 aa). The cysteines at positions 480 and 483 are disulfide-linked.

It belongs to the thioredoxin family. DsbD subfamily.

It is found in the cell inner membrane. It catalyses the reaction [protein]-dithiol + NAD(+) = [protein]-disulfide + NADH + H(+). The enzyme catalyses [protein]-dithiol + NADP(+) = [protein]-disulfide + NADPH + H(+). Functionally, required to facilitate the formation of correct disulfide bonds in some periplasmic proteins and for the assembly of the periplasmic c-type cytochromes. Acts by transferring electrons from cytoplasmic thioredoxin to the periplasm. This transfer involves a cascade of disulfide bond formation and reduction steps. This chain is Thiol:disulfide interchange protein DsbD, found in Escherichia coli O157:H7.